A 124-amino-acid chain; its full sequence is Small ribosomal subunit protein bS6 (124 aa).

Residues 105–115 (EVQHEEARKSA) show a composition bias toward basic and acidic residues. The tract at residues 105-124 (EVQHEEARKSAQSDAPVAAA) is disordered.

Belongs to the bacterial ribosomal protein bS6 family.

In terms of biological role, binds together with bS18 to 16S ribosomal RNA. The chain is Small ribosomal subunit protein bS6 from Polynucleobacter necessarius subsp. necessarius (strain STIR1).